We begin with the raw amino-acid sequence, 359 residues long: DNA replication and repair protein RecF (359 aa).

30-37 contacts ATP; that stretch reads GPNGSGKT.

The protein belongs to the RecF family.

It localises to the cytoplasm. In terms of biological role, the RecF protein is involved in DNA metabolism; it is required for DNA replication and normal SOS inducibility. RecF binds preferentially to single-stranded, linear DNA. It also seems to bind ATP. This is DNA replication and repair protein RecF from Aliivibrio fischeri (strain ATCC 700601 / ES114) (Vibrio fischeri).